The sequence spans 364 residues: S-adenosylmethionine:tRNA ribosyltransferase-isomerase (364 aa).

It belongs to the QueA family. Monomer.

It is found in the cytoplasm. The catalysed reaction is 7-aminomethyl-7-carbaguanosine(34) in tRNA + S-adenosyl-L-methionine = epoxyqueuosine(34) in tRNA + adenine + L-methionine + 2 H(+). It functions in the pathway tRNA modification; tRNA-queuosine biosynthesis. Transfers and isomerizes the ribose moiety from AdoMet to the 7-aminomethyl group of 7-deazaguanine (preQ1-tRNA) to give epoxyqueuosine (oQ-tRNA). The chain is S-adenosylmethionine:tRNA ribosyltransferase-isomerase from Lachnoclostridium phytofermentans (strain ATCC 700394 / DSM 18823 / ISDg) (Clostridium phytofermentans).